A 174-amino-acid polypeptide reads, in one-letter code: Transcriptional repressor NrdR (174 aa).

A zinc finger lies at 3 to 34 (CPFCQHNDTRVIDSRVSEDGTTIRRRRECEAC). In terms of domain architecture, ATP-cone spans 49–139 (PTVVKSDGGR…VYRSFQDVAD (91 aa)).

The protein belongs to the NrdR family. The cofactor is Zn(2+).

Negatively regulates transcription of bacterial ribonucleotide reductase nrd genes and operons by binding to NrdR-boxes. The polypeptide is Transcriptional repressor NrdR (Xanthomonas axonopodis pv. citri (strain 306)).